The chain runs to 265 residues: Putative hydro-lyase PA2116 (265 aa).

This sequence belongs to the D-glutamate cyclase family.

In Pseudomonas aeruginosa (strain ATCC 15692 / DSM 22644 / CIP 104116 / JCM 14847 / LMG 12228 / 1C / PRS 101 / PAO1), this protein is Putative hydro-lyase PA2116.